Reading from the N-terminus, the 423-residue chain is Maintenance of mitochondrial morphology protein 1 (423 aa).

The Lumenal portion of the chain corresponds to 1-20 (MTIPAPIPDKAESSLSFTQG). A helical transmembrane segment spans residues 21–41 (LLLGQLSIVILIGAFIKFFIF). Residues 42 to 423 (GDPPSPDVTA…PGSMPGLSMT (382 aa)) are Cytoplasmic-facing. The SMP-LTD domain maps to 115–327 (QPESLDWFNV…EPRFQQIELP (213 aa)). Disordered regions lie at residues 332 to 372 (RKKN…KEVE) and 387 to 423 (SLDV…LSMT). The segment covering 355 to 372 (RSRDVERDLREEARKEVE) has biased composition (basic and acidic residues).

Belongs to the MMM1 family. As to quaternary structure, homodimer. Component of the ER-mitochondria encounter structure (ERMES) or MDM complex, composed of MMM1, MDM10, MDM12 and MDM34. An MMM1 homodimer associates with one molecule of MDM12 on each side in a pairwise head-to-tail manner, and the SMP-LTD domains of MMM1 and MDM12 generate a continuous hydrophobic tunnel for phospholipid trafficking.

The protein localises to the endoplasmic reticulum membrane. Component of the ERMES/MDM complex, which serves as a molecular tether to connect the endoplasmic reticulum (ER) and mitochondria. Components of this complex are involved in the control of mitochondrial shape and protein biogenesis, and function in nonvesicular lipid trafficking between the ER and mitochondria. The MDM12-MMM1 subcomplex functions in the major beta-barrel assembly pathway that is responsible for biogenesis of all outer membrane beta-barrel proteins, and acts in a late step after the SAM complex. The MDM10-MDM12-MMM1 subcomplex further acts in the TOM40-specific pathway after the action of the MDM12-MMM1 complex. Essential for establishing and maintaining the structure of mitochondria and maintenance of mtDNA nucleoids. This chain is Maintenance of mitochondrial morphology protein 1, found in Botryotinia fuckeliana (strain B05.10) (Noble rot fungus).